Consider the following 394-residue polypeptide: Aromatic-amino-acid aminotransferase (394 aa).

Substrate is bound by residues Gly-34, Tyr-65, Trp-127, and Asn-180. Lys-243 carries the post-translational modification N6-(pyridoxal phosphate)lysine. Position 371 (Arg-371) interacts with substrate.

The protein belongs to the class-I pyridoxal-phosphate-dependent aminotransferase family. Homodimer. Pyridoxal 5'-phosphate serves as cofactor.

The protein localises to the cytoplasm. The enzyme catalyses an aromatic L-alpha-amino acid + 2-oxoglutarate = an aromatic oxo-acid + L-glutamate. Its function is as follows. Shows activities toward both dicarboxylic and aromatic substrates. The sequence is that of Aromatic-amino-acid aminotransferase (tyrB) from Paracoccus denitrificans.